We begin with the raw amino-acid sequence, 360 residues long: Phospho-N-acetylmuramoyl-pentapeptide-transferase (360 aa).

The next 10 membrane-spanning stretches (helical) occupy residues glycine 27–leucine 47, threonine 72–alanine 92, leucine 94–phenylalanine 114, leucine 135–proline 155, glycine 167–serine 187, glycine 199–valine 219, alanine 236–phenylalanine 256, isoleucine 263–alanine 283, valine 289–valine 309, and glutamine 337–leucine 357.

It belongs to the glycosyltransferase 4 family. MraY subfamily. Mg(2+) is required as a cofactor.

The protein localises to the cell inner membrane. It catalyses the reaction UDP-N-acetyl-alpha-D-muramoyl-L-alanyl-gamma-D-glutamyl-meso-2,6-diaminopimeloyl-D-alanyl-D-alanine + di-trans,octa-cis-undecaprenyl phosphate = di-trans,octa-cis-undecaprenyl diphospho-N-acetyl-alpha-D-muramoyl-L-alanyl-D-glutamyl-meso-2,6-diaminopimeloyl-D-alanyl-D-alanine + UMP. Its pathway is cell wall biogenesis; peptidoglycan biosynthesis. Its function is as follows. Catalyzes the initial step of the lipid cycle reactions in the biosynthesis of the cell wall peptidoglycan: transfers peptidoglycan precursor phospho-MurNAc-pentapeptide from UDP-MurNAc-pentapeptide onto the lipid carrier undecaprenyl phosphate, yielding undecaprenyl-pyrophosphoryl-MurNAc-pentapeptide, known as lipid I. The sequence is that of Phospho-N-acetylmuramoyl-pentapeptide-transferase from Beijerinckia indica subsp. indica (strain ATCC 9039 / DSM 1715 / NCIMB 8712).